Reading from the N-terminus, the 161-residue chain is 3-isopropylmalate dehydratase small subunit (161 aa).

This sequence belongs to the LeuD family. LeuD type 2 subfamily. In terms of assembly, heterodimer of LeuC and LeuD.

The catalysed reaction is (2R,3S)-3-isopropylmalate = (2S)-2-isopropylmalate. It functions in the pathway amino-acid biosynthesis; L-leucine biosynthesis; L-leucine from 3-methyl-2-oxobutanoate: step 2/4. In terms of biological role, catalyzes the isomerization between 2-isopropylmalate and 3-isopropylmalate, via the formation of 2-isopropylmaleate. This is 3-isopropylmalate dehydratase small subunit from Pyrobaculum islandicum (strain DSM 4184 / JCM 9189 / GEO3).